A 1625-amino-acid chain; its full sequence is Nonribosomal peptide synthetase aclP (1625 aa).

The Carrier 1 domain occupies 47–123 (TTMNPSSQLL…ALFTDLLSSE (77 aa)). O-(pantetheine 4'-phosphoryl)serine is present on Ser84. Positions 127–157 (IPIPDPSDDSDDLSNPSSSTGGSPRVATPIS) are disordered. Positions 286–567 (ASSQSTVIWA…KYFQRALQLL (282 aa)) are condensation 1. An adenylation region spans residues 614–997 (FESAVSRNPM…GRTDRQIKLR (384 aa)). One can recognise a Carrier 2 domain in the interval 1096–1171 (SPMEKLVGDA…HLAAAIDSGL (76 aa)). O-(pantetheine 4'-phosphoryl)serine is present on Ser1131. The interval 1195 to 1585 (EWWHKYQINE…LQARIPLALS (391 aa)) is condensation 2.

This sequence belongs to the NRP synthetase family.

Its pathway is mycotoxin biosynthesis. In terms of biological role, nonribosomal peptide synthetase; part of the gene cluster that mediates the biosynthesis of aspirochlorine (or antibiotic A30641), an unusual halogenated spiro compound with distinctive antifungal properties due to selective inhibition of protein biosynthesis, and which is also active against bacteria, viruses, and murine tumor cells. The non-ribosomal peptide synthetase (NRPS) aclP is responsible the formation of the diketopiperazine (DKP) core from the condensation of 2 phenylalanine residues. One Phe residue is tailored into chlorotyrosine by hydroxylation and chlorination, whereas the second Phe undergoes an unprecedented C-C bond cleavage to be converted into glycine. After formation of the DKP, sulfur is incorporated into the DKP by conjugation with glutathione by aclG, followed by its stepwise degradation to the thiol by aclI, aclJ and aclK, and the dithiol oxidation by aclT. In addition, oxygenases (aclB, aclC, aclL and aclO) and O-methyltransferases (aclM and aclU) act as tailoring enzymes to produce the intermediate dechloroaspirochlorine. Ultimately, chlorination of dechloroaspirochlorine by the halogenase aclH is the last step in the aspirochlorine pathway. This Aspergillus oryzae (strain ATCC 42149 / RIB 40) (Yellow koji mold) protein is Nonribosomal peptide synthetase aclP.